The following is a 797-amino-acid chain: Protocadherin beta-9 (797 aa).

Positions 1-26 are cleaved as a signal peptide; sequence MKTRGFSFPRQRQVLFLFLFWGVSLA. Topologically, residues 27–690 are extracellular; that stretch reads GSGFGRYSVT…AQADLLTVYL (664 aa). Cadherin domains lie at 35-133, 138-242, 247-347, 352-451, and 456-561; these read VTEE…SPVF, MVLK…VPQF, YETQ…PPEL, LSNS…APAF, and YTLF…SPFV. N-linked (GlcNAc...) asparagine glycosylation occurs at N169. N418 is a glycosylation site (N-linked (GlcNAc...) asparagine). N-linked (GlcNAc...) asparagine glycosylation is present at N567. Residues 568 to 671 enclose the Cadherin 6 domain; that stretch reads GSAPCTELVP…LVDGFSQPYL (104 aa). A helical transmembrane segment spans residues 691 to 711; that stretch reads VVALASVSSLFLLSVLLFVAV. At 712–797 the chain is on the cytoplasmic side; that stretch reads RLCRRSRAAS…TLPNSFGFNY (86 aa). Residues 777 to 797 form a disordered region; that stretch reads HRGGKEIEENSTLPNSFGFNY. Polar residues predominate over residues 786 to 797; sequence NSTLPNSFGFNY.

It localises to the cell membrane. Its function is as follows. Potential calcium-dependent cell-adhesion protein. May be involved in the establishment and maintenance of specific neuronal connections in the brain. The sequence is that of Protocadherin beta-9 (PCDHB9) from Homo sapiens (Human).